Here is a 106-residue protein sequence, read N- to C-terminus: Putative membrane protein insertion efficiency factor (106 aa).

This sequence belongs to the UPF0161 family.

The protein localises to the cell inner membrane. Its function is as follows. Could be involved in insertion of integral membrane proteins into the membrane. This Acinetobacter baylyi (strain ATCC 33305 / BD413 / ADP1) protein is Putative membrane protein insertion efficiency factor.